We begin with the raw amino-acid sequence, 1308 residues long: Tau-tubulin kinase 1 (1308 aa).

The 264-residue stretch at 34-297 (WKVLKKIGGG…LIMSVFENSM (264 aa)) folds into the Protein kinase domain. ATP is bound by residues 40–48 (IGGGGFGEI) and Lys63. Residue Asp154 is the Proton acceptor of the active site. Disordered stretches follow at residues 364–397 (LSDQ…GPEA), 418–448 (PCVE…PVRS), 474–671 (ERRS…APPF), 720–899 (QVPL…AGGG), 985–1085 (EMES…LARL), and 1097–1308 (RLAS…PGAR). Ser441 is modified (phosphoserine). Positions 485–496 (PSRQACSSQPAQ) are enriched in polar residues. The residue at position 541 (Ser541) is a Phosphoserine. Composition is skewed to basic and acidic residues over residues 541-555 (SKEW…ELKD) and 574-589 (ELRP…RRLG). Positions 638-647 (SPSHSPLHSG) are enriched in low complexity. Residues 735 to 769 (GEEEEEEEEEEEEEEEEEEEEEEEEEEEEEEEEEA) are compositionally biased toward acidic residues. A compositionally biased stretch (basic and acidic residues) spans 786 to 795 (GSERSTERSQ). Composition is skewed to polar residues over residues 868–885 (PTGS…SSIL) and 1020–1035 (ASQQ…TISP). The segment covering 1097–1107 (RLASGASSSSS) has biased composition (low complexity).

It belongs to the protein kinase superfamily. CK1 Ser/Thr protein kinase family. Mg(2+) is required as a cofactor. It depends on Mn(2+) as a cofactor. As to expression, expressed in the brain. Strong expression in the cortical layers, the CA1 layers of the hippocampus and the granular layer of the cerebellum. Also expressed in the large cortical pyramidal cells in the temporal cortex, the CA1 pyramidal neurons and the cerebellum granular neurons.

It is found in the cytoplasm. It catalyses the reaction L-seryl-[protein] + ATP = O-phospho-L-seryl-[protein] + ADP + H(+). It carries out the reaction L-threonyl-[protein] + ATP = O-phospho-L-threonyl-[protein] + ADP + H(+). In terms of biological role, serine/threonine kinase which is able to phosphorylate TAU on serine, threonine and tyrosine residues. Induces aggregation of TAU. In Mus musculus (Mouse), this protein is Tau-tubulin kinase 1 (Ttbk1).